Reading from the N-terminus, the 598-residue chain is Aspartate--tRNA(Asp/Asn) ligase (598 aa).

Glu-174 is an L-aspartate binding site. An aspartate region spans residues 198–201 (QQLK). Position 220 (Arg-220) interacts with L-aspartate. ATP is bound by residues 220–222 (RDE) and Gln-229. His-458 contacts L-aspartate. Glu-492 serves as a coordination point for ATP. An L-aspartate-binding site is contributed by Arg-499. 544–547 (GIDR) serves as a coordination point for ATP.

This sequence belongs to the class-II aminoacyl-tRNA synthetase family. Type 1 subfamily. As to quaternary structure, homodimer.

The protein localises to the cytoplasm. The enzyme catalyses tRNA(Asx) + L-aspartate + ATP = L-aspartyl-tRNA(Asx) + AMP + diphosphate. Aspartyl-tRNA synthetase with relaxed tRNA specificity since it is able to aspartylate not only its cognate tRNA(Asp) but also tRNA(Asn). Reaction proceeds in two steps: L-aspartate is first activated by ATP to form Asp-AMP and then transferred to the acceptor end of tRNA(Asp/Asn). This is Aspartate--tRNA(Asp/Asn) ligase from Dehalococcoides mccartyi (strain CBDB1).